The following is a 622-amino-acid chain: Polypeptide N-acetylgalactosaminyltransferase 6 (622 aa).

Over 1 to 8 (MRLLRRRH) the chain is Cytoplasmic. Residues 9–28 (MPLRLAMVGCAFVLFLFLLH) traverse the membrane as a helical; Signal-anchor for type II membrane protein segment. Topologically, residues 29 to 622 (RDVSSREEAT…SDPHQLWLFV (594 aa)) are lumenal. A glycan (N-linked (GlcNAc...) asparagine) is linked at asparagine 86. Intrachain disulfides connect cysteine 165–cysteine 402 and cysteine 393–cysteine 474. A catalytic subdomain A region spans residues 176–285 (LATTSVIIVF…HGWLEPLLAR (110 aa)). Mn(2+)-binding residues include aspartate 269, histidine 271, and histidine 407. A catalytic subdomain B region spans residues 348–410 (PIKSPTFAGG…PCSVVGHVFR (63 aa)). N-linked (GlcNAc...) asparagine glycosylation occurs at asparagine 476. In terms of domain architecture, Ricin B-type lectin spans 506 to 622 (TNQCLDVGEN…SDPHQLWLFV (117 aa)). A disulfide bridge links cysteine 509 with cysteine 527. Aspartate 511, glutamate 514, histidine 528, and asparagine 533 together coordinate UDP-N-acetyl-alpha-D-galactosamine. 2 disulfide bridges follow: cysteine 553–cysteine 566 and cysteine 597–cysteine 610.

The protein belongs to the glycosyltransferase 2 family. GalNAc-T subfamily. Mn(2+) is required as a cofactor. In terms of tissue distribution, expressed in placenta and trachea. Weakly expressed in brain and pancreas. Expressed in fibroblast. Weakly or not expressed in lung, liver, muscle, kidney, spleen, thymus, prostate, testis, ovary, intestine, colon, leukocyte, stomach, thyroid, spinal cord, lymph node, trachea, adrenal gland and bone marrow.

It is found in the golgi apparatus membrane. It catalyses the reaction L-seryl-[protein] + UDP-N-acetyl-alpha-D-galactosamine = a 3-O-[N-acetyl-alpha-D-galactosaminyl]-L-seryl-[protein] + UDP + H(+). The enzyme catalyses L-threonyl-[protein] + UDP-N-acetyl-alpha-D-galactosamine = a 3-O-[N-acetyl-alpha-D-galactosaminyl]-L-threonyl-[protein] + UDP + H(+). Its pathway is protein modification; protein glycosylation. Functionally, catalyzes the initial reaction in O-linked oligosaccharide biosynthesis, the transfer of an N-acetyl-D-galactosamine residue to a serine or threonine residue on the protein receptor. May participate in synthesis of oncofetal fibronectin. Has activity toward MUC1A, MUC2, EA2 and fibronectin peptides. Glycosylates FGF23. This is Polypeptide N-acetylgalactosaminyltransferase 6 (GALNT6) from Homo sapiens (Human).